We begin with the raw amino-acid sequence, 284 residues long: Tropomyosin (284 aa).

Positions 1-284 (MDAIKKKMQA…DQTFQELSGY (284 aa)) form a coiled coil. The segment covering 110–142 (TAKLEEATHTADESERVRKVMENRSFQDEERAN) has biased composition (basic and acidic residues). Residues 110–143 (TAKLEEATHTADESERVRKVMENRSFQDEERANT) form a disordered region.

Belongs to the tropomyosin family.

Tropomyosin, in association with the troponin complex, plays a central role in the calcium dependent regulation of muscle contraction. This Anisakis simplex (Herring worm) protein is Tropomyosin.